Here is a 592-residue protein sequence, read N- to C-terminus: Tegument protein US23 (592 aa).

The tract at residues 407–491 is disordered; that stretch reads PRSLGDGEEE…NNVVPNVERR (85 aa). A compositionally biased stretch (acidic residues) spans 460 to 481; the sequence is ADDEEQGEDDDDSGAEPMEPEE.

This sequence belongs to the herpesviridae US22 family.

It localises to the virion tegument. The polypeptide is Tegument protein US23 (US23) (Homo sapiens (Human)).